A 326-amino-acid polypeptide reads, in one-letter code: MAKSMATLDSGTTCSSWNQSGDRLAAGSLNGKLSIYESSTSSSSTFSCTSKVRVSESSIVKIVWLPSEYGDAVACVCEDGSLSIWEELSEDAHGLEWKLCKSMKNKSSQVLDVQFGVSRKSLKMVAAYSDGYLRVFELLNPLELKNWQLQAEFQNVIDSLSTLGKPSSLSASVSWNPMKGEEQEPSFVLAFNSDSPHLNSSKIWEFDEAHNRWLAVAELALPEDKGDPVYALSWAPNIGRPYEVVAVATHKGIGIWHVGLAPDLEGRLPVKKVSSLSGHQGEVWQMEWDMSGMTLASTGSDGMVKLWQSNLNGEWHEQATLEPVPS.

5 WD repeats span residues 7–46 (TLDS…SSTF), 54–95 (VSES…AHGL), 105–146 (NKSS…ELKN), 224–266 (DKGD…DLEG), and 278–317 (GHQG…EWHE).

It belongs to the WD repeat SEC13 family. In terms of assembly, part of the nuclear pore complex (NPC). The NPC has an eight-fold symmetrical structure comprising a central transport channel and two rings, the cytoplasmic and nuclear rings, to which eight filaments are attached. The cytoplasmic filaments have loose ends, while the nuclear filaments are joined in a distal ring, forming a nuclear basket. NPCs are highly dynamic in configuration and composition, and can be devided in 3 subcomplexes, the NUP62 subcomplex, the NUP107-160 subcomplex and the NUP93 subcomplex, containing approximately 30 different nucleoporin proteins.

It localises to the nucleus envelope. Its subcellular location is the nucleus. It is found in the cytoplasm. The protein localises to the nuclear pore complex. In terms of biological role, required for proper export of mRNAs from the nucleus to the cytoplasm. In Arabidopsis thaliana (Mouse-ear cress), this protein is Protein SEH1.